The primary structure comprises 88 residues: Sec-independent protein translocase protein TatA (88 aa).

A helical transmembrane segment spans residues 1 to 21 (MGSIGWAQLLIIAVIVVLLFG). Positions 41-88 (KAMGDDSQTPPTNVDKTSNDADFAKSITEKQQPVAKAEESKSHEKEQG) are disordered. Polar residues predominate over residues 46–56 (DSQTPPTNVDK). Residues 76 to 88 (KAEESKSHEKEQG) show a composition bias toward basic and acidic residues.

Belongs to the TatA/E family. In terms of assembly, the Tat system comprises two distinct complexes: a TatABC complex, containing multiple copies of TatA, TatB and TatC subunits, and a separate TatA complex, containing only TatA subunits. Substrates initially bind to the TatABC complex, which probably triggers association of the separate TatA complex to form the active translocon.

The protein localises to the cell inner membrane. In terms of biological role, part of the twin-arginine translocation (Tat) system that transports large folded proteins containing a characteristic twin-arginine motif in their signal peptide across membranes. TatA could form the protein-conducting channel of the Tat system. The protein is Sec-independent protein translocase protein TatA of Yersinia pestis.